A 147-amino-acid chain; its full sequence is Large ribosomal subunit protein uL13 (147 aa).

Residues 126–147 form a disordered region; sequence AGPTHPHQAQQPVPYEIKQVAQ.

The protein belongs to the universal ribosomal protein uL13 family. Part of the 50S ribosomal subunit.

This protein is one of the early assembly proteins of the 50S ribosomal subunit, although it is not seen to bind rRNA by itself. It is important during the early stages of 50S assembly. This Parafrankia sp. (strain EAN1pec) protein is Large ribosomal subunit protein uL13.